A 111-amino-acid chain; its full sequence is Fluoride-specific ion channel FluC 3 (111 aa).

Helical transmembrane passes span 26-46, 53-73, and 91-111; these read IPAGTLTVNLLGSIVLALLTF, VVYLVNIGMLGSFTTFSTFAY, and IFLNVMLCLLGVSIAYLALML. Na(+) is bound by residues Gly63 and Thr66.

Belongs to the fluoride channel Fluc/FEX (TC 1.A.43) family.

Its subcellular location is the cell membrane. The catalysed reaction is fluoride(in) = fluoride(out). Its activity is regulated as follows. Na(+) is not transported, but it plays an essential structural role and its presence is essential for fluoride channel function. In terms of biological role, fluoride-specific ion channel. Important for reducing fluoride concentration in the cell, thus reducing its toxicity. This chain is Fluoride-specific ion channel FluC 3, found in Methanosarcina acetivorans (strain ATCC 35395 / DSM 2834 / JCM 12185 / C2A).